The following is a 357-amino-acid chain: UDP-N-acetylglucosamine--N-acetylmuramyl-(pentapeptide) pyrophosphoryl-undecaprenol N-acetylglucosamine transferase (357 aa).

Residues 12–14, Asn-124, Arg-162, Ser-190, Ile-243, 262–267, and Gln-288 contribute to the UDP-N-acetyl-alpha-D-glucosamine site; these read TGG and ALTVAE.

The protein belongs to the glycosyltransferase 28 family. MurG subfamily.

It localises to the cell inner membrane. It catalyses the reaction di-trans,octa-cis-undecaprenyl diphospho-N-acetyl-alpha-D-muramoyl-L-alanyl-D-glutamyl-meso-2,6-diaminopimeloyl-D-alanyl-D-alanine + UDP-N-acetyl-alpha-D-glucosamine = di-trans,octa-cis-undecaprenyl diphospho-[N-acetyl-alpha-D-glucosaminyl-(1-&gt;4)]-N-acetyl-alpha-D-muramoyl-L-alanyl-D-glutamyl-meso-2,6-diaminopimeloyl-D-alanyl-D-alanine + UDP + H(+). It participates in cell wall biogenesis; peptidoglycan biosynthesis. Cell wall formation. Catalyzes the transfer of a GlcNAc subunit on undecaprenyl-pyrophosphoryl-MurNAc-pentapeptide (lipid intermediate I) to form undecaprenyl-pyrophosphoryl-MurNAc-(pentapeptide)GlcNAc (lipid intermediate II). The protein is UDP-N-acetylglucosamine--N-acetylmuramyl-(pentapeptide) pyrophosphoryl-undecaprenol N-acetylglucosamine transferase of Alcanivorax borkumensis (strain ATCC 700651 / DSM 11573 / NCIMB 13689 / SK2).